Consider the following 433-residue polypeptide: Divergent protein kinase domain 2B (433 aa).

Positions 1–31 (MEPQLGPEAAALRPGWLALLLWVSALSCSFS) are cleaved as a signal peptide. Asn100 carries an N-linked (GlcNAc...) asparagine glycan.

Belongs to the DIPK family.

It is found in the secreted. The sequence is that of Divergent protein kinase domain 2B from Homo sapiens (Human).